Consider the following 348-residue polypeptide: Dihydroorotase (348 aa).

The Zn(2+) site is built by histidine 14 and histidine 16. Substrate-binding positions include 16–18 and asparagine 42; that span reads HLR. 3 residues coordinate Zn(2+): lysine 100, histidine 137, and histidine 175. The residue at position 100 (lysine 100) is an N6-carboxylysine. Histidine 137 contributes to the substrate binding site. Leucine 220 provides a ligand contact to substrate. Aspartate 248 contributes to the Zn(2+) binding site. Aspartate 248 is a catalytic residue. The substrate site is built by histidine 252 and alanine 264.

Belongs to the metallo-dependent hydrolases superfamily. DHOase family. Class II DHOase subfamily. As to quaternary structure, homodimer. The cofactor is Zn(2+).

It carries out the reaction (S)-dihydroorotate + H2O = N-carbamoyl-L-aspartate + H(+). The protein operates within pyrimidine metabolism; UMP biosynthesis via de novo pathway; (S)-dihydroorotate from bicarbonate: step 3/3. Catalyzes the reversible cyclization of carbamoyl aspartate to dihydroorotate. This is Dihydroorotase from Pseudomonas putida (strain GB-1).